The following is a 1132-amino-acid chain: DNA topoisomerase 2 (1132 aa).

Residues Asn68, Asn100, 137–139 (SSN), and 150–157 (GKNGLGVK) each bind ATP. The interaction with DNA stretch occupies residues 327–329 (NKP). ATP is bound at residue 363–365 (QNK). A Toprim domain is found at 442–577 (CTLIVCEGLS…NLKDFPFISS (136 aa)). Positions 448, 538, and 540 each coordinate Mg(2+). Residues 713-1125 (LPHLIDGLKE…NEGQMWLKDI (413 aa)) form the Topo IIA-type catalytic domain. Catalysis depends on Tyr803, which acts as the O-(5'-phospho-DNA)-tyrosine intermediate. Residues 979 to 988 (KLRSYIHTSN) are interaction with DNA.

Belongs to the type II topoisomerase family. It depends on Mg(2+) as a cofactor. The cofactor is Mn(2+). Ca(2+) is required as a cofactor.

The enzyme catalyses ATP-dependent breakage, passage and rejoining of double-stranded DNA.. Can introduce negative superhelical turns into double-stranded circular DNA. The chain is DNA topoisomerase 2 (TOP2) from Acheta domesticus (House cricket).